Here is a 345-residue protein sequence, read N- to C-terminus: Uroporphyrinogen decarboxylase (345 aa).

Substrate-binding positions include 28–32, Asp77, Tyr153, Ser208, and His322; that span reads RQAGR.

It belongs to the uroporphyrinogen decarboxylase family. In terms of assembly, homodimer.

Its subcellular location is the cytoplasm. It carries out the reaction uroporphyrinogen III + 4 H(+) = coproporphyrinogen III + 4 CO2. It functions in the pathway porphyrin-containing compound metabolism; protoporphyrin-IX biosynthesis; coproporphyrinogen-III from 5-aminolevulinate: step 4/4. In terms of biological role, catalyzes the decarboxylation of four acetate groups of uroporphyrinogen-III to yield coproporphyrinogen-III. The polypeptide is Uroporphyrinogen decarboxylase (Solibacter usitatus (strain Ellin6076)).